The chain runs to 217 residues: MSGGLAPSKSTVYVSNLPFSLTNNDLYRIFSKYGKVVKVTIMKDKDTRRSKGVAFILFLDKDSAQNCTRAINNKQLFGRVIKASIAIDNGRAAEFIRRRNYFDKSKCYECGESGHLSYACPKNMLGEREPPKKKEKKKKKKIPEPEEEIEEVEESEDEGEDPALDSLSQAIAFQQAKIEEEQKKWKPSSGGPSTSDDSRRPRIKKSTYFSDEEELSD.

The RRM domain maps to 10 to 88; sequence STVYVSNLPF…RVIKASIAID (79 aa). A CCHC-type zinc finger spans residues 105 to 122; sequence SKCYECGESGHLSYACPK. The segment at 120 to 217 is disordered; it reads CPKNMLGERE…YFSDEEELSD (98 aa). Residues 145–163 are compositionally biased toward acidic residues; that stretch reads PEEEIEEVEESEDEGEDPA. Phosphoserine is present on residues Ser155, Ser210, and Ser216.

In terms of assembly, component of the U11/U12 snRNPs that are part of the U12-type spliceosome. Interacts with ZRSR1.

It is found in the nucleus. Its subcellular location is the nucleoplasm. This Bos taurus (Bovine) protein is Zinc finger CCHC-type and RNA-binding motif-containing protein 1 (ZCRB1).